Here is a 388-residue protein sequence, read N- to C-terminus: Chorismate synthase (388 aa).

NADP(+)-binding residues include Arg39 and Arg45. FMN contacts are provided by residues 130–132, 251–252, Gly296, 311–315, and Arg337; these read RSS, NA, and KPIPT.

This sequence belongs to the chorismate synthase family. As to quaternary structure, homotetramer. FMNH2 serves as cofactor.

The enzyme catalyses 5-O-(1-carboxyvinyl)-3-phosphoshikimate = chorismate + phosphate. The protein operates within metabolic intermediate biosynthesis; chorismate biosynthesis; chorismate from D-erythrose 4-phosphate and phosphoenolpyruvate: step 7/7. Catalyzes the anti-1,4-elimination of the C-3 phosphate and the C-6 proR hydrogen from 5-enolpyruvylshikimate-3-phosphate (EPSP) to yield chorismate, which is the branch point compound that serves as the starting substrate for the three terminal pathways of aromatic amino acid biosynthesis. This reaction introduces a second double bond into the aromatic ring system. The chain is Chorismate synthase from Streptococcus mutans serotype c (strain ATCC 700610 / UA159).